The chain runs to 21 residues: Nucleoside diphosphate kinase (21 aa).

Residue H4 is the Pros-phosphohistidine intermediate of the active site.

Belongs to the NDK family. Homohexamer. Mg(2+) is required as a cofactor.

It is found in the cytoplasm. The catalysed reaction is a 2'-deoxyribonucleoside 5'-diphosphate + ATP = a 2'-deoxyribonucleoside 5'-triphosphate + ADP. It catalyses the reaction a ribonucleoside 5'-diphosphate + ATP = a ribonucleoside 5'-triphosphate + ADP. Functionally, major role in the synthesis of nucleoside triphosphates other than ATP. The ATP gamma phosphate is transferred to the NDP beta phosphate via a ping-pong mechanism, using a phosphorylated active-site intermediate. The sequence is that of Nucleoside diphosphate kinase (NDK1) from Candida albicans (Yeast).